The primary structure comprises 5085 residues: Protein piccolo (5085 aa).

The segment covering 1–20 has biased composition (low complexity); the sequence is MGNEASLEGEGLPEGLAAAA. Disordered stretches follow at residues 1–142 and 173–516; these read MGNE…DFKE and DLIS…TPAQ. Residues 92-101 are compositionally biased toward pro residues; the sequence is PGKPPDPGRP. Basic and acidic residues-rich tracts occupy residues 110–121, 132–142, and 184–198; these read RTTDTFRSEQKL, KESKSRTDFKE, and ETTK…EQGK. Phosphoserine occurs at positions 211 and 231. Polar residues predominate over residues 227 to 240; it reads QQDSSPKSVSSQQA. The span at 253 to 268 shows a compositional bias: low complexity; that stretch reads PSQQSPAQTPAQQASP. Composition is skewed to polar residues over residues 275–285, 318–332, and 375–391; these read QPGSAKATVQQ, KTSS…SLAQ, and TPAQ…QQPG. The tract at residues 372 to 491 is 12 X 10 AA tandem approximate repeats of P-A-K-P-Q-P-Q-Q-P-X; sequence PTKTPAQQSG…LAKPSAQQPT (120 aa). Residues 392-408 are compositionally biased toward pro residues; that stretch reads PTKPSPQQPIPAKPQPQ. Over residues 409 to 423 the composition is skewed to low complexity; the sequence is QPVATKTQPQQSAPA. Residues 424–472 are compositionally biased toward pro residues; the sequence is KPQPQQPAPAKPQPQQPTPAKPQPQPPTPAKPQPQPPTATKPQPQPPTA. Over residues 486 to 499 the composition is skewed to polar residues; it reads SAQQPTKSISQTVT. The segment at 523 to 547 adopts a C4-type zinc-finger fold; it reads CPLCNTTELLLHIPEKANFNTCTEC. 5 disordered regions span residues 586-880, 896-1012, 1069-1357, 1373-1604, and 1622-1815; these read AAIP…TVTG, LIST…ACPL, QLGD…PSDL, STLV…EELV, and TIAD…SDPE. Residues 596 to 613 are compositionally biased toward low complexity; it reads PKAATAPTATASKSPVPS. A compositionally biased stretch (basic and acidic residues) spans 618-654; it reads PKKEPPSKQDSPKALESKKPPEPKKPPEPKKPPEPKK. Over residues 672 to 682 the composition is skewed to low complexity; sequence APQLPVAEALP. Residues 683 to 693 show a composition bias toward pro residues; that stretch reads EPAPPKEPSGP. Basic and acidic residues predominate over residues 705–717; it reads VEPKQPKMTETRA. A compositionally biased stretch (polar residues) spans 718–767; the sequence is DIQSSSTTKPDILSSQVQSQAQVKTASPLKTDSAKPSQSFPPTGEKTTPL. Positions 790–808 are enriched in basic and acidic residues; sequence ESKDPKHIDPIQKKDEPKK. Phosphoserine is present on residues Ser-857 and Ser-869. Composition is skewed to polar residues over residues 867 to 878, 896 to 906, and 917 to 936; these read PKSQPTTPQETV, LISTAGQQGPH, and QAPT…STGQ. The residue at position 873 (Thr-873) is a Phosphothreonine. The segment covering 990-1004 has biased composition (basic and acidic residues); that stretch reads EPEKAVPAHKPDKTT. A C4-type zinc finger spans residues 1010–1033; the sequence is CPLCRTELNLGSQEPPNFNTCTEC. Pro residues predominate over residues 1077-1092; it reads PPAPSGPKASPMPAPA. Positions 1110–1129 are enriched in basic and acidic residues; the sequence is KEAEGKTEAEKPVPEKETAS. At Thr-1133 the chain carries Phosphothreonine. Basic and acidic residues-rich tracts occupy residues 1141–1150, 1157–1199, and 1274–1295; these read QKLEESEGKK, PEKK…KLPP, and SSKD…DKSD. Over residues 1300-1318 the composition is skewed to polar residues; it reads QQPKSPQGLSDTGYSSDGI. Phosphoserine occurs at positions 1304, 1314, 1315, 1344, 1346, 1349, 1350, and 1353. Over residues 1331 to 1345 the composition is skewed to basic and acidic residues; the sequence is SDEKDLLKGLKKDSF. Residues 1346–1355 are compositionally biased toward low complexity; that stretch reads SQESSPSSPS. The segment covering 1378-1396 has biased composition (basic and acidic residues); sequence EKAEKKTQPQKISPEKPQD. The span at 1397–1407 shows a compositional bias: polar residues; that stretch reads QQKTQTASETL. The segment covering 1417 to 1456 has biased composition (basic and acidic residues); sequence KESQEKKVSPKKDSEQGFPSRKEHKEKPELVDDLSPRRAS. Phosphoserine is present on residues Ser-1451, Ser-1463, Ser-1464, Ser-1466, Ser-1469, Ser-1493, Ser-1496, Ser-1517, and Ser-1519. A compositionally biased stretch (acidic residues) spans 1511 to 1523; the sequence is SADEDASGSEDEE. Residue Thr-1564 is modified to Phosphothreonine. Phosphoserine is present on residues Ser-1565, Ser-1575, and Ser-1587. Positions 1578-1587 are enriched in acidic residues; it reads DEDDETFDES. A compositionally biased stretch (basic and acidic residues) spans 1588 to 1599; that stretch reads PELKFRETKSQE. Polar residues predominate over residues 1622-1635; sequence TIADKYSSESSQKK. Acidic residues predominate over residues 1640–1650; it reads FDEEPELEMES. Residue Ser-1650 is modified to Phosphoserine. A Phosphothreonine modification is found at Thr-1652. 2 positions are modified to phosphoserine: Ser-1654 and Ser-1659. Positions 1662–1679 are enriched in polar residues; sequence EGSSSLHASSFTPGTSPT. Residues 1719 to 1732 show a composition bias toward acidic residues; the sequence is DSSEEEELREEEEL. 2 positions are modified to phosphoserine: Ser-1720 and Ser-1721. Residues 1733 to 1746 show a composition bias toward basic and acidic residues; the sequence is LKEQEKQRELEQQQ. Thr-1772 carries the post-translational modification Phosphothreonine. Residue Ser-1778 is modified to Phosphoserine. The span at 1787 to 1802 shows a compositional bias: basic and acidic residues; it reads EELRQAAEMEELHRSS. A phosphoserine mark is found at Ser-1807, Ser-1812, Ser-1820, and Ser-1841. Disordered regions lie at residues 2116-2139, 2275-2385, and 2456-2486; these read PSES…SSVC, ELTK…PTYP, and KPPI…TGLS. Over residues 2121–2139 the composition is skewed to low complexity; the sequence is TSVPPSDTPSLTSSISSVC. Residues 2350-2384 are compositionally biased toward pro residues; it reads QPPPPPPPPPPSPSTSSPPPTPPLPPATSPKPPTY. Ser-2511 is subject to Phosphoserine. An O-linked (GlcNAc) threonine glycan is attached at Thr-2702. The O-linked (GlcNAc) serine glycan is linked to Ser-2976. Thr-3014 carries the post-translational modification Phosphothreonine. 2 disordered regions span residues 3350 to 3457 and 3503 to 3572; these read KEEK…PLSK and KTYK…LYSP. A Phosphoserine modification is found at Ser-3374. The span at 3377–3386 shows a compositional bias: basic and acidic residues; sequence DDPRNLKKIV. Ser-3388 is modified (phosphoserine). A phosphothreonine mark is found at Thr-3392 and Thr-3419. Positions 3419–3428 are enriched in acidic residues; that stretch reads TDDEDQDEWD. Polar residues predominate over residues 3511–3523; the sequence is GCQTETDSDTQSP. Phosphoserine occurs at positions 3522, 3530, 3561, 3565, 3571, 3574, 3577, 3598, 3624, 3626, and 3632. Disordered stretches follow at residues 3602-3695 and 3774-3816; these read VLHP…ASRR and AEDR…FIPP. 2 stretches are compositionally biased toward polar residues: residues 3647-3663 and 3679-3691; these read EGFT…SGTQ and STGT…TMGT. Residue Ser-3781 is modified to Phosphoserine. Basic and acidic residues predominate over residues 3791-3803; it reads SRVESQHGVERPR. Residues 3805–3816 are compositionally biased toward polar residues; that stretch reads APQTEFSQFIPP. Residues Ser-4034 and Ser-4150 each carry the phosphoserine modification. 2 disordered regions span residues 4225–4248 and 4272–4291; these read ADKP…YGLD and VSFG…LPIS. Over residues 4228–4248 the composition is skewed to low complexity; sequence PYSSGSRSRPSSRPSSVYGLD. Residues 4275-4291 are compositionally biased toward polar residues; it reads GHSSSSARTKPTSLPIS. Ser-4304, Ser-4308, Ser-4311, Ser-4340, and Ser-4376 each carry phosphoserine. The segment at 4335–4357 is disordered; that stretch reads RDQFGSSHSLPEVQQHMREESRT. In terms of domain architecture, PDZ spans 4442–4536; it reads RVKITRDFKD…EAEICVRLDL (95 aa). Positions 4589-4638 are disordered; the sequence is VEKGSHAHSGPTSAGSSSVPSPGQPGSPSVSKKKHSSTKPTDGPKAASHP. Over residues 4595–4618 the composition is skewed to low complexity; sequence AHSGPTSAGSSSVPSPGQPGSPSV. Position 4609 is a phosphoserine (Ser-4609). The C2 1 domain maps to 4639 to 4768; the sequence is ITGEIQLQIN…SHLDNTPRWY (130 aa). Positions 4668 and 4674 each coordinate Ca(2+). Position 4723 is a phosphoserine (Ser-4723). 4 residues coordinate Ca(2+): Asp-4738, Asp-4740, Ser-4743, and Asp-4746. Disordered stretches follow at residues 4775–4851 and 4874–4908; these read ESID…SVAQ and QPTK…SEGS. Low complexity-rich tracts occupy residues 4783-4795 and 4822-4832; these read HSSQ…PKPS and SSPGSSKSSSE. A compositionally biased stretch (polar residues) spans 4840 to 4851; it reads PSRSQSKTSVAQ. A compositionally biased stretch (low complexity) spans 4886 to 4908; it reads SSVSTGSSGSSVGSGYSVDSEGS. The region spanning 4950–5075 is the C2 2 domain; the sequence is VMGEIKLALK…DLRKRIVNWH (126 aa).

Interacts with BSN, ERC2/CAST1, RIMS1 and UNC13A. Interacts (via C-terminus) with TRIO (via N-terminus). Interacts with CTBP1. Interacts with SIAH1; this interaction negatively regulates SIAH1 E3 ligase activity. Directly interacts with GIT1 and GIT2. Ca(2+) is required as a cofactor. Expressed in brain (at protein level).

It localises to the presynaptic active zone. Scaffold protein of the presynaptic cytomatrix at the active zone (CAZ) which is the place in the synapse where neurotransmitter is released. After synthesis, participates in the formation of Golgi-derived membranous organelles termed Piccolo-Bassoon transport vesicles (PTVs) that are transported along axons to sites of nascent synaptic contacts. At the presynaptic active zone, regulates the spatial organization of synaptic vesicle cluster, the protein complexes that execute membrane fusion and compensatory endocytosis. Organizes as well the readily releasable pool of synaptic vesicles and safeguards a fraction of them to be not immediately available for action potential-induced release. Also functions in processes other than assembly such as the regulation of specific presynaptic protein ubiquitination by interacting with SIAH1 or the regulation of presynaptic autophagy. Also mediates synapse to nucleus communication leading to reconfiguration of gene expression by associating with the transcriptional corepressor CTBP1 and by subsequently reducing the size of its pool available for nuclear import. The protein is Protein piccolo (Pclo) of Rattus norvegicus (Rat).